The chain runs to 428 residues: 3-phosphoshikimate 1-carboxyvinyltransferase (428 aa).

Residues Lys23, Ser24, and Arg28 each coordinate 3-phosphoshikimate. Lys23 is a phosphoenolpyruvate binding site. The phosphoenolpyruvate site is built by Gly97 and Arg125. 3-phosphoshikimate-binding residues include Ser170, Ser171, Gln172, Ser198, Asp314, Asn337, and Lys341. Gln172 lines the phosphoenolpyruvate pocket. Residue Asp314 is the Proton acceptor of the active site. Phosphoenolpyruvate-binding residues include Arg345, Arg387, and Lys412.

It belongs to the EPSP synthase family. As to quaternary structure, monomer.

The protein resides in the cytoplasm. It catalyses the reaction 3-phosphoshikimate + phosphoenolpyruvate = 5-O-(1-carboxyvinyl)-3-phosphoshikimate + phosphate. The protein operates within metabolic intermediate biosynthesis; chorismate biosynthesis; chorismate from D-erythrose 4-phosphate and phosphoenolpyruvate: step 6/7. Catalyzes the transfer of the enolpyruvyl moiety of phosphoenolpyruvate (PEP) to the 5-hydroxyl of shikimate-3-phosphate (S3P) to produce enolpyruvyl shikimate-3-phosphate and inorganic phosphate. This is 3-phosphoshikimate 1-carboxyvinyltransferase from Erwinia tasmaniensis (strain DSM 17950 / CFBP 7177 / CIP 109463 / NCPPB 4357 / Et1/99).